The chain runs to 95 residues: Aspartyl/glutamyl-tRNA(Asn/Gln) amidotransferase subunit C (95 aa).

This sequence belongs to the GatC family. In terms of assembly, heterotrimer of A, B and C subunits.

The catalysed reaction is L-glutamyl-tRNA(Gln) + L-glutamine + ATP + H2O = L-glutaminyl-tRNA(Gln) + L-glutamate + ADP + phosphate + H(+). The enzyme catalyses L-aspartyl-tRNA(Asn) + L-glutamine + ATP + H2O = L-asparaginyl-tRNA(Asn) + L-glutamate + ADP + phosphate + 2 H(+). Functionally, allows the formation of correctly charged Asn-tRNA(Asn) or Gln-tRNA(Gln) through the transamidation of misacylated Asp-tRNA(Asn) or Glu-tRNA(Gln) in organisms which lack either or both of asparaginyl-tRNA or glutaminyl-tRNA synthetases. The reaction takes place in the presence of glutamine and ATP through an activated phospho-Asp-tRNA(Asn) or phospho-Glu-tRNA(Gln). This Acidiphilium cryptum (strain JF-5) protein is Aspartyl/glutamyl-tRNA(Asn/Gln) amidotransferase subunit C.